The sequence spans 1241 residues: Sterol 3-beta-glucosyltransferase (1241 aa).

A compositionally biased stretch (acidic residues) spans 1–11 (MSGIESTEEPC). Disordered regions lie at residues 1–97 (MSGI…KPSI) and 124–189 (DQQV…TLRK). Residues 25–34 (PEERQTRKDS) show a composition bias toward basic and acidic residues. The span at 136–155 (ESEDQQADESSDEQEDDDQD) shows a compositional bias: acidic residues. The GRAM 1 domain occupies 220-267 (NKLKRTFDISDTDVFISDYPCWLMGDVLLQGHLYITKHHILFFAFLPK). Positions 271-373 (SISKSGALTT…WVSSLKKHIF (103 aa)) constitute a PH domain. The tract at residues 499 to 556 (DDFSQEQESAESSKPVSDDEIVSADDNQELEEKQPQDNLANAEKENHDKVSRANSRRT) is disordered. Positions 516 to 527 (DDEIVSADDNQE) are enriched in acidic residues. The segment covering 540–549 (AEKENHDKVS) has biased composition (basic and acidic residues). Residues 609 to 675 (ERFRKHFSLT…SDIENVNKEK (67 aa)) form the GRAM 2 domain. The tract at residues 720 to 741 (KGSTDSSPPNASEGSSDESCNL) is disordered. Over residues 723–741 (TDSSPPNASEGSSDESCNL) the composition is skewed to polar residues. Residues Ser-797, Arg-798, Asp-800, Asn-1071, Val-1098, His-1100, His-1113, Ser-1116, Gly-1117, Thr-1118, Asp-1137, and Gln-1138 each contribute to the UDP-alpha-D-glucose site.

This sequence belongs to the glycosyltransferase 28 family.

Its subcellular location is the cytoplasm. It is found in the preautophagosomal structure membrane. It catalyses the reaction a sterol + UDP-alpha-D-glucose = a sterol 3-beta-D-glucoside + UDP + H(+). The enzyme catalyses ergosterol + UDP-alpha-D-glucose = ergosteryl 3-beta-D-glucoside + UDP + H(+). In terms of biological role, sterol glycosyltransferase responsible for the glycosylation of ergosterol to form ergosterol-glucoside. Mediates autophagic degradation of peroxisomes (pexophagy). The chain is Sterol 3-beta-glucosyltransferase from Pichia angusta (Yeast).